Here is a 527-residue protein sequence, read N- to C-terminus: Light-independent protochlorophyllide reductase subunit B (527 aa).

A [4Fe-4S] cluster-binding site is contributed by aspartate 36. Residue aspartate 290 is the Proton donor of the active site. A substrate-binding site is contributed by 425-426; sequence GL.

It belongs to the ChlB/BchB/BchZ family. As to quaternary structure, protochlorophyllide reductase is composed of three subunits; ChlL, ChlN and ChlB. Forms a heterotetramer of two ChlB and two ChlN subunits. It depends on [4Fe-4S] cluster as a cofactor.

It carries out the reaction chlorophyllide a + oxidized 2[4Fe-4S]-[ferredoxin] + 2 ADP + 2 phosphate = protochlorophyllide a + reduced 2[4Fe-4S]-[ferredoxin] + 2 ATP + 2 H2O. The protein operates within porphyrin-containing compound metabolism; chlorophyll biosynthesis (light-independent). Its function is as follows. Component of the dark-operative protochlorophyllide reductase (DPOR) that uses Mg-ATP and reduced ferredoxin to reduce ring D of protochlorophyllide (Pchlide) to form chlorophyllide a (Chlide). This reaction is light-independent. The NB-protein (ChlN-ChlB) is the catalytic component of the complex. The protein is Light-independent protochlorophyllide reductase subunit B of Synechococcus sp. (strain RCC307).